Reading from the N-terminus, the 581-residue chain is A-type ATP synthase subunit A (581 aa).

Residue 232-239 participates in ATP binding; that stretch reads GPFGSGKT.

The protein belongs to the ATPase alpha/beta chains family. Has multiple subunits with at least A(3), B(3), C, D, E, F, H, I and proteolipid K(x).

Its subcellular location is the cell membrane. The enzyme catalyses ATP + H2O + 4 H(+)(in) = ADP + phosphate + 5 H(+)(out). In terms of biological role, component of the A-type ATP synthase that produces ATP from ADP in the presence of a proton gradient across the membrane. The A chain is the catalytic subunit. This is A-type ATP synthase subunit A from Methanocorpusculum labreanum (strain ATCC 43576 / DSM 4855 / Z).